The chain runs to 711 residues: Ribosomal RNA large subunit methyltransferase K/L (711 aa).

The THUMP domain maps to 42 to 153 (DAQRAVLWSR…KGRATISVDL (112 aa)).

This sequence belongs to the methyltransferase superfamily. RlmKL family.

It localises to the cytoplasm. It carries out the reaction guanosine(2445) in 23S rRNA + S-adenosyl-L-methionine = N(2)-methylguanosine(2445) in 23S rRNA + S-adenosyl-L-homocysteine + H(+). The catalysed reaction is guanosine(2069) in 23S rRNA + S-adenosyl-L-methionine = N(2)-methylguanosine(2069) in 23S rRNA + S-adenosyl-L-homocysteine + H(+). Functionally, specifically methylates the guanine in position 2445 (m2G2445) and the guanine in position 2069 (m7G2069) of 23S rRNA. The sequence is that of Ribosomal RNA large subunit methyltransferase K/L from Xanthomonas oryzae pv. oryzae (strain KACC10331 / KXO85).